The primary structure comprises 107 residues: UPF0060 membrane protein Sala_0701 (107 aa).

4 helical membrane passes run 4–24 (FAYI…WAWL), 30–50 (VWWV…LTLV), 60–80 (AAYG…VEGA), and 87–107 (LIGA…PRGG).

Belongs to the UPF0060 family.

It is found in the cell inner membrane. This is UPF0060 membrane protein Sala_0701 from Sphingopyxis alaskensis (strain DSM 13593 / LMG 18877 / RB2256) (Sphingomonas alaskensis).